The primary structure comprises 329 residues: uncharacterized protein (329 aa).

The Nudix hydrolase domain occupies 27 to 185 (PRRASVAVII…IQIDSSRALK (159 aa)). 3 consecutive transmembrane segments (helical) span residues 123 to 143 (VITS…VFIL), 227 to 247 (PFLR…LSPS), and 303 to 323 (LTLL…FLII).

Its subcellular location is the membrane. This is an uncharacterized protein from Schizosaccharomyces pombe (strain 972 / ATCC 24843) (Fission yeast).